The following is a 348-amino-acid chain: MLVAPPAFAEAQVLLQRLLNHESLGAVQARALMEQWLSGTLPEALSGALLAALQSKGVSAQELAAMAQVLQEQAVAVEASDRREPLVDTCGTGGDGAETFNISTAVAFVTAAAGVKVAKHGNRSASGRVGSADVLEALGLNLTAPSDRIHAAVDEVGITFLFAPGWHPAMKAVAPLRKILGVRTVFNLLGPLVNPLRPTGQVIGVYNPGLLPTISGALAELGVRRAIVLHGREGLDEGGLADCTDLAIVREGQLSQQVVDPRDLGLTQAPTVALKGGSVEENADILKAVLQGKGTRAQQDAVLLNAALALEVGEQVDRLDQGISLARSVLASGAAWQKLTQLAAFLQS.

Residues Gly91, 94–95, Thr99, 101–104, 119–127, and Ser131 each bind 5-phospho-alpha-D-ribose 1-diphosphate; these read GD, NIST, and KHGNRSASG. Gly91 is an anthranilate binding site. Ser103 is a Mg(2+) binding site. Asn122 provides a ligand contact to anthranilate. Anthranilate is bound at residue Arg177. 2 residues coordinate Mg(2+): Asp236 and Glu237.

It belongs to the anthranilate phosphoribosyltransferase family. In terms of assembly, homodimer. Mg(2+) is required as a cofactor.

The enzyme catalyses N-(5-phospho-beta-D-ribosyl)anthranilate + diphosphate = 5-phospho-alpha-D-ribose 1-diphosphate + anthranilate. Its pathway is amino-acid biosynthesis; L-tryptophan biosynthesis; L-tryptophan from chorismate: step 2/5. Its function is as follows. Catalyzes the transfer of the phosphoribosyl group of 5-phosphorylribose-1-pyrophosphate (PRPP) to anthranilate to yield N-(5'-phosphoribosyl)-anthranilate (PRA). The protein is Anthranilate phosphoribosyltransferase of Synechococcus elongatus (strain ATCC 33912 / PCC 7942 / FACHB-805) (Anacystis nidulans R2).